Reading from the N-terminus, the 219-residue chain is 7-cyano-7-deazaguanine synthase (219 aa).

An ATP-binding site is contributed by 10 to 20; it reads FSGGQDSTTCL. 4 residues coordinate Zn(2+): cysteine 188, cysteine 197, cysteine 200, and cysteine 203.

The protein belongs to the QueC family. The cofactor is Zn(2+).

The enzyme catalyses 7-carboxy-7-deazaguanine + NH4(+) + ATP = 7-cyano-7-deazaguanine + ADP + phosphate + H2O + H(+). The protein operates within purine metabolism; 7-cyano-7-deazaguanine biosynthesis. Catalyzes the ATP-dependent conversion of 7-carboxy-7-deazaguanine (CDG) to 7-cyano-7-deazaguanine (preQ(0)). In Bacteroides fragilis (strain ATCC 25285 / DSM 2151 / CCUG 4856 / JCM 11019 / LMG 10263 / NCTC 9343 / Onslow / VPI 2553 / EN-2), this protein is 7-cyano-7-deazaguanine synthase.